Consider the following 102-residue polypeptide: Small ribosomal subunit protein uS10 (102 aa).

It belongs to the universal ribosomal protein uS10 family. Part of the 30S ribosomal subunit.

Functionally, involved in the binding of tRNA to the ribosomes. The chain is Small ribosomal subunit protein uS10 from Bifidobacterium animalis subsp. lactis (strain AD011).